The primary structure comprises 177 residues: PBAN-type neuropeptides (177 aa).

Positions 1 to 23 are cleaved as a signal peptide; it reads MIVTGNPVCAIALLLCLVFRASG. Positions 24-54 are excised as a propeptide; sequence EYELEMSSGGSNDGRSPSNDFGSCTDGKCTK. The interval 28 to 73 is disordered; the sequence is EMSSGGSNDGRSPSNDFGSCTDGKCTKRTTTTQESGISSGMWFGPR. The segment covering 31–45 has biased composition (polar residues); the sequence is SGGSNDGRSPSNDFG. A compositionally biased stretch (low complexity) spans 47-59; it reads CTDGKCTKRTTTT. At L74 the chain carries Leucine amide. A propeptide spanning residues 78–113 is cleaved from the precursor; sequence HKSNEKQQINPEIEMLVNALDQPGMRWTVITIPANE. Leucine amide occurs at positions 124, 154, and 166. Residues 169–177 constitute a propeptide that is removed on maturation; the sequence is QSRSVSRKI.

The protein belongs to the pyrokinin family. Pyrokinins (PK) 1 to 4 are expressed in the retrocerebral complex. PK 1 is expressed in central brain, anntennal lobes and abominal ganglia. PK 2 is expressed in optical lobes and in gnathal, thoracic and abdominal ganglia. PK 3 is expressed in optical lobes and in thoracic and abdominal ganglia (at protein level).

Its subcellular location is the secreted. Functionally, pyrokinins mediate visceral muscle contractile activity (myotropic activity). This chain is PBAN-type neuropeptides, found in Camponotus floridanus (Florida carpenter ant).